We begin with the raw amino-acid sequence, 102 residues long: MFAIIETGGKQVKVEEGQEIFVEKLDVNEGDSFTFDKVLFVGGDAVKVGAPTVEGASVTATVQKQGRGKKITVFTYKRRKDSKRKKGHRQPYTKLTIDKINA.

Positions 79–91 are enriched in basic residues; the sequence is RKDSKRKKGHRQP. The disordered stretch occupies residues 79-102; it reads RKDSKRKKGHRQPYTKLTIDKINA.

The protein belongs to the bacterial ribosomal protein bL21 family. In terms of assembly, part of the 50S ribosomal subunit. Contacts protein L20.

This protein binds to 23S rRNA in the presence of protein L20. This chain is Large ribosomal subunit protein bL21, found in Staphylococcus saprophyticus subsp. saprophyticus (strain ATCC 15305 / DSM 20229 / NCIMB 8711 / NCTC 7292 / S-41).